The following is a 532-amino-acid chain: Probable cyclic di-GMP phosphodiesterase PdeD (532 aa).

Transmembrane regions (helical) follow at residues 16–36 and 245–265; these read MIVCTICALVTLASTLSVRFI and LPLAVLLSLLVGYIAWLATAY. One can recognise an EAL domain in the interval 266–515; the sequence is RMSFSREINL…DFPKWLAGSQ (250 aa).

The protein resides in the cell membrane. It carries out the reaction 3',3'-c-di-GMP + H2O = 5'-phosphoguanylyl(3'-&gt;5')guanosine + H(+). In terms of biological role, phosphodiesterase (PDE) that catalyzes the hydrolysis of cyclic-di-GMP (c-di-GMP) to 5'-pGpG. May serve as a negative regulator of cellulose synthesis (as has been suggested for S.typhimurium); overexpression inhibits cell aggregation in strains able to produce adhesive curli fimbriae. Cyclic-di-GMP is a second messenger which controls cell surface-associated traits in bacteria. This chain is Probable cyclic di-GMP phosphodiesterase PdeD, found in Escherichia coli (strain K12).